The primary structure comprises 788 residues: Diacylglycerol kinase gamma (788 aa).

Basic and acidic residues predominate over residues 83–93 (PRQETPDHPKE). The segment at 83 to 150 (PRQETPDHPK…WGEPNAPASS (68 aa)) is disordered. Residues 95-109 (ASSSEPNVSDSNAES) show a composition bias toward polar residues. EF-hand domains lie at 172-207 (RPQD…MLHV) and 217-252 (ELRP…TIPL). Residues Asp185, Asp187, Asn189, Glu196, Asp230, Asn232, Asp234, and Glu241 each coordinate Ca(2+). Phorbol-ester/DAG-type zinc fingers lie at residues 268–318 (RHAW…IPGC) and 333–380 (QHAW…STAC). In terms of domain architecture, DAGKc spans 427–561 (PGTHPLLVLV…LDRWYLEVMP (135 aa)). Residues 768–788 (MMGPPQKSSFFSLRRKSRSKD) form a disordered region.

Belongs to the eukaryotic diacylglycerol kinase family. In terms of tissue distribution, expressed specifically in brain. Highly expressed in cerebellar Purkinje cells (at protein level).

It is found in the membrane. Its subcellular location is the cytoplasm. It localises to the cytosol. The protein localises to the cytoskeleton. It catalyses the reaction a 1,2-diacyl-sn-glycerol + ATP = a 1,2-diacyl-sn-glycero-3-phosphate + ADP + H(+). The enzyme catalyses 1,2-didecanoyl-sn-glycerol + ATP = 1,2-didecanoyl-sn-glycero-3-phosphate + ADP + H(+). It carries out the reaction 1,2-di-(9Z-octadecenoyl)-sn-glycerol + ATP = 1,2-di-(9Z-octadecenoyl)-sn-glycero-3-phosphate + ADP + H(+). The catalysed reaction is 1-octadecanoyl-2-(9Z,12Z)-octadecadienoyl-sn-glycerol + ATP = 1-octadecanoyl-2-(9Z,12Z-octadecadienoyl)-sn-glycero-3-phosphate + ADP + H(+). It catalyses the reaction 1-octadecanoyl-2-(5Z,8Z,11Z,14Z-eicosatetraenoyl)-sn-glycerol + ATP = 1-octadecanoyl-2-(5Z,8Z,11Z,14Z-eicosatetraenoyl)-sn-glycero-3-phosphate + ADP + H(+). It functions in the pathway lipid metabolism; glycerolipid metabolism. The activity is calcium-dependent. Requires phosphatidylserine for maximal activity. Its function is as follows. Diacylglycerol kinase that converts diacylglycerol/DAG into phosphatidic acid/phosphatidate/PA and regulates the respective levels of these two bioactive lipids. Thereby, acts as a central switch between the signaling pathways activated by these second messengers with different cellular targets and opposite effects in numerous biological processes. Has no apparent specificity with regard to the acyl compositions of diacylglycerol. Specifically expressed in the cerebellum where it controls the level of diacylglycerol which in turn regulates the activity of protein kinase C gamma. Through protein kinase C gamma, indirectly regulates the dendritic development of Purkinje cells, cerebellar long term depression and ultimately cerebellar motor coordination. The sequence is that of Diacylglycerol kinase gamma (Dgkg) from Rattus norvegicus (Rat).